The primary structure comprises 208 residues: Holliday junction resolvase RecU (208 aa).

Residues 1–25 form a disordered region; it reads MNYPNGKPFNRNKTKVGRTNDHKSS. The Mg(2+) site is built by threonine 87, aspartate 89, glutamate 102, and glutamine 121.

It belongs to the RecU family. Mg(2+) serves as cofactor.

Its subcellular location is the cytoplasm. The enzyme catalyses Endonucleolytic cleavage at a junction such as a reciprocal single-stranded crossover between two homologous DNA duplexes (Holliday junction).. Functionally, endonuclease that resolves Holliday junction intermediates in genetic recombination. Cleaves mobile four-strand junctions by introducing symmetrical nicks in paired strands. Promotes annealing of linear ssDNA with homologous dsDNA. Required for DNA repair, homologous recombination and chromosome segregation. This Staphylococcus carnosus (strain TM300) protein is Holliday junction resolvase RecU.